The chain runs to 100 residues: Small ribosomal subunit protein uS14c (100 aa).

Belongs to the universal ribosomal protein uS14 family. In terms of assembly, part of the 30S ribosomal subunit.

It localises to the plastid. The protein localises to the chloroplast. Binds 16S rRNA, required for the assembly of 30S particles. The sequence is that of Small ribosomal subunit protein uS14c from Eucalyptus globulus subsp. globulus (Tasmanian blue gum).